Here is a 174-residue protein sequence, read N- to C-terminus: Ribosome maturation factor RimM (174 aa).

Positions 98–171 (EGEFYFHEII…KIEIELMEGL (74 aa)) constitute a PRC barrel domain.

This sequence belongs to the RimM family. As to quaternary structure, binds ribosomal protein uS19.

The protein resides in the cytoplasm. In terms of biological role, an accessory protein needed during the final step in the assembly of 30S ribosomal subunit, possibly for assembly of the head region. Essential for efficient processing of 16S rRNA. May be needed both before and after RbfA during the maturation of 16S rRNA. It has affinity for free ribosomal 30S subunits but not for 70S ribosomes. In Bacillus subtilis (strain 168), this protein is Ribosome maturation factor RimM.